The chain runs to 306 residues: D-glucosamine-6-phosphate 4-epimerase (306 aa).

The SIS domain maps to 19-153 (DIPGVKTAEK…TGSNYRVQDL (135 aa)). Glu200 serves as the catalytic Proton acceptor. Catalysis depends on His216, which acts as the Proton donor. Arg296 acts as the Proton acceptor in catalysis.

This sequence belongs to the PGI/PMI family.

It catalyses the reaction D-glucosamine 6-phosphate = D-galactosamine 6-phosphate. Functionally, involved in the synthesis of UDP-N-acetylgalactosamine (UDP-GalNAc). Catalyzes the conversion of glucosamine-6-phosphate (GlcN-6-P) to galactosamine-6-phosphate (GalN-6-P). The protein is D-glucosamine-6-phosphate 4-epimerase of Sulfolobus acidocaldarius (strain ATCC 33909 / DSM 639 / JCM 8929 / NBRC 15157 / NCIMB 11770).